The sequence spans 922 residues: Isoleucine--tRNA ligase (922 aa).

The 'HIGH' region motif lies at Pro-57 to His-67. Glu-553 serves as a coordination point for L-isoleucyl-5'-AMP. The 'KMSKS' region motif lies at Lys-594–Ser-598. Residue Lys-597 coordinates ATP. Residues Cys-892, Cys-895, Cys-912, and Cys-915 each coordinate Zn(2+).

The protein belongs to the class-I aminoacyl-tRNA synthetase family. IleS type 1 subfamily. Monomer. Requires Zn(2+) as cofactor.

It is found in the cytoplasm. It carries out the reaction tRNA(Ile) + L-isoleucine + ATP = L-isoleucyl-tRNA(Ile) + AMP + diphosphate. Functionally, catalyzes the attachment of isoleucine to tRNA(Ile). As IleRS can inadvertently accommodate and process structurally similar amino acids such as valine, to avoid such errors it has two additional distinct tRNA(Ile)-dependent editing activities. One activity is designated as 'pretransfer' editing and involves the hydrolysis of activated Val-AMP. The other activity is designated 'posttransfer' editing and involves deacylation of mischarged Val-tRNA(Ile). In Desulfitobacterium hafniense (strain Y51), this protein is Isoleucine--tRNA ligase.